The chain runs to 352 residues: Ribosomal RNA large subunit methyltransferase M (352 aa).

Residues Ser184, 217–220 (APGG), Asp236, Asp256, and Asp272 each bind S-adenosyl-L-methionine. The Proton acceptor role is filled by Lys301.

Belongs to the class I-like SAM-binding methyltransferase superfamily. RNA methyltransferase RlmE family. RlmM subfamily. In terms of assembly, monomer.

It localises to the cytoplasm. The catalysed reaction is cytidine(2498) in 23S rRNA + S-adenosyl-L-methionine = 2'-O-methylcytidine(2498) in 23S rRNA + S-adenosyl-L-homocysteine + H(+). Functionally, catalyzes the 2'-O-methylation at nucleotide C2498 in 23S rRNA. This chain is Ribosomal RNA large subunit methyltransferase M, found in Pseudomonas aeruginosa (strain UCBPP-PA14).